The primary structure comprises 205 residues: Purine catabolism protein PucB (205 aa).

It functions in the pathway purine metabolism; hypoxanthine degradation. In terms of biological role, required for xanthine dehydrogenase activity. Could be involved in formation of the molybdenum cofactor required by xanthine dehydrogenase. The chain is Purine catabolism protein PucB (pucB) from Bacillus subtilis (strain 168).